Reading from the N-terminus, the 417-residue chain is Senescence-associated protein AAF, chloroplastic (417 aa).

Residues 1–36 constitute a chloroplast transit peptide; sequence MALNVSKVVPNSPILVKSVNASRSRRVLLAYVHHPL.

It belongs to the ATA15/OSA15 family. Expressed in leaves. Expressed in 7-day-old seedlings, roots, rosette leaves, cauline leaves and flower buds.

The protein resides in the plastid. Its subcellular location is the chloroplast. Involved in modulation of redox homeostasis to regulate leaf senescence mediated by age and stress factors during plant development. Its function is dependent of EIN2, a central factor of ethylene signaling. This chain is Senescence-associated protein AAF, chloroplastic, found in Arabidopsis thaliana (Mouse-ear cress).